We begin with the raw amino-acid sequence, 324 residues long: Cytochrome c biogenesis protein CcsA (324 aa).

8 helical membrane-spanning segments follow: residues 17–37, 44–64, 68–88, 99–119, 145–165, 230–250, 264–278, and 291–311; these read IISV…IPAL, GMIA…IYSG, LSNL…IHMI, YLSA…TSGL, MLLS…LLVI, VISI…VWAN, TWAF…IYSH, and AIVA…VNLL.

It belongs to the CcmF/CycK/Ccl1/NrfE/CcsA family. As to quaternary structure, may interact with Ccs1.

It localises to the plastid. The protein localises to the chloroplast thylakoid membrane. Required during biogenesis of c-type cytochromes (cytochrome c6 and cytochrome f) at the step of heme attachment. In Lemna minor (Common duckweed), this protein is Cytochrome c biogenesis protein CcsA.